A 952-amino-acid polypeptide reads, in one-letter code: Glycine dehydrogenase (decarboxylating) (952 aa).

N6-(pyridoxal phosphate)lysine is present on lysine 703.

Belongs to the GcvP family. In terms of assembly, the glycine cleavage system is composed of four proteins: P, T, L and H. Pyridoxal 5'-phosphate serves as cofactor.

The enzyme catalyses N(6)-[(R)-lipoyl]-L-lysyl-[glycine-cleavage complex H protein] + glycine + H(+) = N(6)-[(R)-S(8)-aminomethyldihydrolipoyl]-L-lysyl-[glycine-cleavage complex H protein] + CO2. Functionally, the glycine cleavage system catalyzes the degradation of glycine. The P protein binds the alpha-amino group of glycine through its pyridoxal phosphate cofactor; CO(2) is released and the remaining methylamine moiety is then transferred to the lipoamide cofactor of the H protein. This is Glycine dehydrogenase (decarboxylating) from Mycolicibacterium gilvum (strain PYR-GCK) (Mycobacterium gilvum (strain PYR-GCK)).